A 492-amino-acid chain; its full sequence is Dipeptide permease D (492 aa).

A run of 13 helical transmembrane segments spans residues 14-34 (VVAL…LLIL), 49-69 (ALFS…GYLA), 91-111 (LVLG…AIIV), 138-158 (GGFS…PIAC), 167-187 (WAMG…IFLC), 212-232 (NWGW…VLFW), 236-256 (SVYA…RIYL), 269-289 (LIVV…QGGS), 312-332 (MFQS…AWLV), 344-364 (IWGK…ILTL), 379-399 (LMVL…PVAM), 413-433 (VLTG…AGVI), and 458-478 (VFSQ…VIWL).

It belongs to the major facilitator superfamily. Proton-dependent oligopeptide transporter (POT/PTR) (TC 2.A.17) family. DtpD subfamily.

Its subcellular location is the cell inner membrane. Probable proton-dependent permease that transports dipeptides. The chain is Dipeptide permease D from Klebsiella pneumoniae subsp. pneumoniae (strain ATCC 700721 / MGH 78578).